We begin with the raw amino-acid sequence, 170 residues long: Adenine phosphoribosyltransferase (170 aa).

The protein belongs to the purine/pyrimidine phosphoribosyltransferase family. Homodimer.

It localises to the cytoplasm. It catalyses the reaction AMP + diphosphate = 5-phospho-alpha-D-ribose 1-diphosphate + adenine. The protein operates within purine metabolism; AMP biosynthesis via salvage pathway; AMP from adenine: step 1/1. Catalyzes a salvage reaction resulting in the formation of AMP, that is energically less costly than de novo synthesis. In Kosmotoga olearia (strain ATCC BAA-1733 / DSM 21960 / TBF 19.5.1), this protein is Adenine phosphoribosyltransferase.